The primary structure comprises 689 residues: Translation initiation factor IF-2 (689 aa).

A disordered region spans residues 70-107 (VRSKKNSNKKKKKGKGNQDKRQENFAGKQQAQTVETPD). Over residues 71 to 84 (RSKKNSNKKKKKGK) the composition is skewed to basic residues. One can recognise a tr-type G domain in the interval 191–360 (ERPAVVTIMG…LLVSEVEEYK (170 aa)). A G1 region spans residues 200-207 (GHVDHGKT). A GTP-binding site is contributed by 200–207 (GHVDHGKT). The G2 stretch occupies residues 225 to 229 (GITQH). The tract at residues 246-249 (DTPG) is G3. Residues 246–250 (DTPGH) and 300–303 (NKMD) contribute to the GTP site. The G4 stretch occupies residues 300–303 (NKMD). The tract at residues 336–338 (SAI) is G5.

This sequence belongs to the TRAFAC class translation factor GTPase superfamily. Classic translation factor GTPase family. IF-2 subfamily.

The protein resides in the cytoplasm. Its function is as follows. One of the essential components for the initiation of protein synthesis. Protects formylmethionyl-tRNA from spontaneous hydrolysis and promotes its binding to the 30S ribosomal subunits. Also involved in the hydrolysis of GTP during the formation of the 70S ribosomal complex. This is Translation initiation factor IF-2 from Bacillus cytotoxicus (strain DSM 22905 / CIP 110041 / 391-98 / NVH 391-98).